The primary structure comprises 105 residues: UPF0060 membrane protein Ajs_1326 (105 aa).

Helical transmembrane passes span Phe4–Trp24, Ser30–Leu50, Ala60–Ile80, and Pro82–Phe102.

Belongs to the UPF0060 family.

The protein resides in the cell inner membrane. This is UPF0060 membrane protein Ajs_1326 from Acidovorax sp. (strain JS42).